We begin with the raw amino-acid sequence, 198 residues long: Recombination protein RecR (198 aa).

The segment at 56 to 71 (CGVCGNVDTSNPCGIC) adopts a C4-type zinc-finger fold. The region spanning 79 to 174 (RSICVVEEVA…RVTQLAHGLP (96 aa)) is the Toprim domain.

It belongs to the RecR family.

May play a role in DNA repair. It seems to be involved in an RecBC-independent recombinational process of DNA repair. It may act with RecF and RecO. This Novosphingobium aromaticivorans (strain ATCC 700278 / DSM 12444 / CCUG 56034 / CIP 105152 / NBRC 16084 / F199) protein is Recombination protein RecR.